Reading from the N-terminus, the 158-residue chain is Protein Smg homolog (158 aa).

It belongs to the Smg family.

In Shewanella oneidensis (strain ATCC 700550 / JCM 31522 / CIP 106686 / LMG 19005 / NCIMB 14063 / MR-1), this protein is Protein Smg homolog.